Here is a 608-residue protein sequence, read N- to C-terminus: Isocitrate dehydrogenase kinase/phosphatase (608 aa).

ATP contacts are provided by residues 327–333 (APGIKGL) and K348. The active site involves D383. The segment at 589–608 (FDSTPDAGDGDSAGDAQRAA) is disordered.

Belongs to the AceK family.

Its subcellular location is the cytoplasm. The catalysed reaction is L-seryl-[isocitrate dehydrogenase] + ATP = O-phospho-L-seryl-[isocitrate dehydrogenase] + ADP + H(+). Bifunctional enzyme which can phosphorylate or dephosphorylate isocitrate dehydrogenase (IDH) on a specific serine residue. This is a regulatory mechanism which enables bacteria to bypass the Krebs cycle via the glyoxylate shunt in response to the source of carbon. When bacteria are grown on glucose, IDH is fully active and unphosphorylated, but when grown on acetate or ethanol, the activity of IDH declines drastically concomitant with its phosphorylation. This Burkholderia ambifaria (strain MC40-6) protein is Isocitrate dehydrogenase kinase/phosphatase.